The primary structure comprises 341 residues: Porin-like protein L (341 aa).

The N-terminal stretch at 1–21 (MNKKLIALAVAAASISSVATA) is a signal peptide.

The protein belongs to the Gram-negative porin family. As to quaternary structure, homotrimer.

It is found in the cell outer membrane. Its function is as follows. Forms pores that allow passive diffusion of small molecules across the outer membrane. This Photobacterium profundum (strain SS9) protein is Porin-like protein L (ompL).